A 562-amino-acid chain; its full sequence is MELLRNLFEGYPNLWGGGVAHSVLILSLVIAFGIMLGKIKVAGISLGVTWILFVGIVFGHFNLNLNEHLLHFLKEFGLILFVYSIGLQVGPGFFSAFKKGGFTLNMLAMIVVFAGVIITLALHFITGIPITTMVGILSGAVTNTPGLGAAQQANSDLTGIDAPEIALGYAVAYPLGVVGCIMSLLGLKYLFRINTKQEEAEAEQGLGHLQELTVRPVSLEVRNEALHGKRIKDIRPLVNRNFVVSRIRHLNGKKESELVNSDTELHLGDEILVIATPIDIEAITAFFGKPIEVEWEQLNKELISRRILITKPELNGKTLAQLKIRNNFGASVTRVNRSGVDLVASPQLQLQMGDRVTIVGSELAVSHAEKVLGNSMKRLNHPNLIPIFLGIALGCILGSIPFMFPGIPQPVKLGLAGGPLIVSILISRFGPQYKLITYTTMSANLMIREIGISLFLACVGLGAGDGFVETIIHEGGYVWIAYGMIITIVPLLLAGFIGRYAFKLNYYTLIGVLAGSTTNPPALAYSNDLTSCDAPAVGYATVYPLTMFLRVLTAQLLILSLG.

The next 5 membrane-spanning stretches (helical) occupy residues 15–34, 41–63, 78–97, 104–126, and 165–187; these read WGGG…AFGI, VAGI…HFNL, LILF…FSAF, LNML…HFIT, and IALG…LLGL. RCK C-terminal domains lie at 204–286 and 289–374; these read QGLG…ITAF and KPIE…VLGN. Transmembrane regions (helical) follow at residues 384 to 403, 413 to 430, 450 to 472, 476 to 498, 505 to 524, and 539 to 561; these read LIPI…IPFM, LGLA…SRFG, IGIS…ETII, GYVW…GFIG, NYYT…PALA, and YATV…ILSL.

The protein belongs to the AAE transporter (TC 2.A.81) family.

Its subcellular location is the cell membrane. This is an uncharacterized protein from Bacteroides fragilis (strain YCH46).